A 194-amino-acid polypeptide reads, in one-letter code: UPF0301 protein CBU_2093 (194 aa).

Belongs to the UPF0301 (AlgH) family.

This chain is UPF0301 protein CBU_2093, found in Coxiella burnetii (strain RSA 493 / Nine Mile phase I).